The sequence spans 237 residues: Glutathione S-transferase L1 (237 aa).

Residues 29-110 form the GST N-terminal domain; the sequence is GTTRLYISYT…YVDSNFDGPS (82 aa). Residues 39-40, 67-68, 81-82, and 94-95 contribute to the glutathione site; these read CP, NR, KV, and ES. A GST C-terminal domain is found at 112 to 232; it reads YPEDSAKREF…KTDSEYVVNY (121 aa).

Belongs to the GST superfamily. Lambda family.

The protein localises to the cytoplasm. Its subcellular location is the cytosol. It catalyses the reaction RX + glutathione = an S-substituted glutathione + a halide anion + H(+). Its function is as follows. Catalyzes the glutathione-dependent reduction of S-glutathionylquercetin to quercetin. In vitro, possesses glutathione-dependent thiol transferase activity toward 2-hydroxyethyl disulfide (HED). This is Glutathione S-transferase L1 (GSTL1) from Arabidopsis thaliana (Mouse-ear cress).